Consider the following 162-residue polypeptide: Caveolin-2 (162 aa).

Topologically, residues 1 to 86 (MGLETEKTDV…FEISKYVMYK (86 aa)) are cytoplasmic. Tyr19 carries the phosphotyrosine; by SRC modification. Ser20 and Ser23 each carry phosphoserine. The residue at position 27 (Tyr27) is a Phosphotyrosine; by SRC. At Ser36 the chain carries Phosphoserine. Positions 87-107 (FLTVFLAIPLAFLAGILFATL) form an intramembrane region, helical. The Cytoplasmic segment spans residues 108-162 (SCLHIWIIMPFVKTCLMVLPSVQTIWKSVTDAIVAPLCTSIGRSFSSVSLQLSQD).

This sequence belongs to the caveolin family. Monomer or homodimer. Interacts with CAV1; the interaction forms a stable heterooligomeric complex that is required for targeting to lipid rafts and for caveolae formation. Tyrosine phosphorylated forms do not form heterooligomers with the Tyr-19-phosphorylated form existing as a monomer or dimer, and the Tyr-27-form as a monomer only. Interacts (tyrosine phosphorylated form) with the SH2 domain-containing proteins, RASA1, NCK1 and SRC. Interacts (tyrosine phosphorylated form) with INSR, the interaction (Tyr-27-phosphorylated form) is increased on insulin stimulation. Interacts (Tyr-19 phosphorylated form) with MAPK1 (phosphorylated form); the interaction, promoted by insulin, leads to nuclear location and MAPK1 activation. Interacts with STAT3; the interaction is increased on insulin-induced tyrosine phosphorylation leading to STAT activation. In terms of processing, phosphorylated on serine and tyrosine residues. CAV1 promotes phosphorylation on Ser-23 which then targets the complex to the plasma membrane, lipid rafts and caveolae. Phosphorylation on Ser-36 appears to modulate mitosis in endothelial cells. Phosphorylation on both Tyr-19 and Tyr-27 is required for insulin-induced 'Ser-727' phosphorylation of STAT3 and its activation. Phosphorylation on Tyr-19 is required for insulin-induced phosphorylation of MAPK1 and DNA binding of STAT3. Tyrosine phosphorylation is induced by both EGF and insulin (By. similarity).

Its subcellular location is the nucleus. The protein localises to the cytoplasm. It localises to the golgi apparatus membrane. The protein resides in the cell membrane. It is found in the membrane. Its subcellular location is the caveola. May act as a scaffolding protein within caveolar membranes. Interacts directly with G-protein alpha subunits and can functionally regulate their activity. Acts as an accessory protein in conjunction with CAV1 in targeting to lipid rafts and driving caveolae formation. The Ser-36 phosphorylated form has a role in modulating mitosis in endothelial cells. Positive regulator of cellular mitogenesis of the MAPK signaling pathway. Required for the insulin-stimulated nuclear translocation and activation of MAPK1 and STAT3, and the subsequent regulation of cell cycle progression. The sequence is that of Caveolin-2 (CAV2) from Aotus nancymaae (Ma's night monkey).